A 282-amino-acid polypeptide reads, in one-letter code: DNA processing protein DprA (282 aa).

Belongs to the DprA/Smf family. Homodimer; forms tail-to-tail dimers, forms nucleoprotein complex (NPC) which requires at least 30 nucleotides (nt) of ssDNA becoming optimal with 50 nt. Interacts with RecA, forms mixed DprA-RecA-ssDNA filaments. Interacts with ComFA and ComFC.

The protein localises to the cytoplasm. Its function is as follows. Protein that helps load RecA onto ssDNA during transformation. Required for DNA transformation. Not required for DNA uptake but for a later stage of transformation. Thought to interact at the cell pole with newly imported transforming ssDNA which it binds cooperatively, protecting linear and circular ssDNA from nuclease action. Forms bridges between DNA segments. Favors the loading of RecA onto ssDNA and formation of RecA-DNA filaments, triggering RecA-catalysis of ATP-driven homologous DNA pairing. The chain is DNA processing protein DprA from Streptococcus pneumoniae (strain ATCC BAA-255 / R6).